Consider the following 250-residue polypeptide: MSKLFIPYIMGNKDFISNLKVLSDEGADIVEIGLPFSDPVADGPTIMEAGNKAIEEGMNARKILQELKAHKDELKDTKYVLMTYYNIILHYGEEQFIKDCEAAGVYGLIIPDLPFELGEQLKERFKDSSVKIISLIAMTASDDRIQKIAQHADGFIYTVTMNATTGENGQFHPELQSKIEYIQKNADVPVVAGFGIRNPEQVSTLSEFTDGIVIGSEIVKRFANDSETSIRQYLQSIRRALDETKAAANS.

Residues glutamate 31 and aspartate 42 each act as proton acceptor in the active site.

The protein belongs to the TrpA family. In terms of assembly, tetramer of two alpha and two beta chains.

The catalysed reaction is (1S,2R)-1-C-(indol-3-yl)glycerol 3-phosphate + L-serine = D-glyceraldehyde 3-phosphate + L-tryptophan + H2O. It participates in amino-acid biosynthesis; L-tryptophan biosynthesis; L-tryptophan from chorismate: step 5/5. Its function is as follows. The alpha subunit is responsible for the aldol cleavage of indoleglycerol phosphate to indole and glyceraldehyde 3-phosphate. This Staphylococcus carnosus (strain TM300) protein is Tryptophan synthase alpha chain.